Reading from the N-terminus, the 276-residue chain is Natural cytotoxicity triggering receptor 2 (276 aa).

Residues Met-1 to Ala-21 form the signal peptide. In terms of domain architecture, Ig-like spans Gln-22–Ser-120. Over Gln-22–Ala-192 the chain is Extracellular. 2 disulfide bridges follow: Cys-40-Cys-109 and Cys-55-Cys-63. 2 stretches are compositionally biased toward polar residues: residues Thr-138–Val-156 and Glu-167–Leu-183. The tract at residues Thr-138 to Arg-184 is disordered. Asn-180 carries N-linked (GlcNAc...) asparagine glycosylation. A helical transmembrane segment spans residues Leu-193–Val-213. The Cytoplasmic portion of the chain corresponds to Trp-214–Leu-276.

This sequence belongs to the natural cytotoxicity receptor (NCR) family. Interacts with TYROBP/DAP12. Interacts with KMT2E isoform NKp44L. As to expression, selectively expressed by activated NK cells and by in vitro cultured (i.e. activated) TCRg/d lymphoid cells.

Its subcellular location is the cell membrane. Its function is as follows. Cytotoxicity-activating receptor that may contribute to the increased efficiency of activated natural killer (NK) cells to mediate tumor cell lysis. This Homo sapiens (Human) protein is Natural cytotoxicity triggering receptor 2 (NCR2).